Consider the following 1282-residue polypeptide: Protein crumbs homolog 2 (1282 aa).

A signal peptide spans methionine 1–alanine 35. Residues glycine 36–glutamate 1221 are Extracellular-facing. The EGF-like 1 domain occupies glutamate 71–glutamate 110. 27 disulfide bridges follow: cysteine 75–cysteine 86, cysteine 80–cysteine 98, cysteine 100–cysteine 109, cysteine 116–cysteine 127, cysteine 121–cysteine 136, cysteine 138–cysteine 147, cysteine 154–cysteine 165, cysteine 159–cysteine 174, cysteine 176–cysteine 185, cysteine 192–cysteine 203, cysteine 197–cysteine 212, cysteine 214–cysteine 224, cysteine 231–cysteine 242, cysteine 236–cysteine 251, cysteine 253–cysteine 262, cysteine 269–cysteine 280, cysteine 274–cysteine 310, cysteine 312–cysteine 321, cysteine 328–cysteine 339, cysteine 333–cysteine 348, cysteine 350–cysteine 359, cysteine 366–cysteine 377, cysteine 371–cysteine 386, cysteine 388–cysteine 397, cysteine 404–cysteine 415, cysteine 409–cysteine 428, and cysteine 430–cysteine 439. One can recognise an EGF-like 2; calcium-binding domain in the interval aspartate 112–glutamate 148. Residues glutamate 150–glutamine 186 enclose the EGF-like 3; calcium-binding domain. In terms of domain architecture, EGF-like 4; calcium-binding spans aspartate 188–glutamate 225. 2 EGF-like domains span residues glutamate 227–glutamate 263 and aspartate 265–serine 322. An N-linked (GlcNAc...) asparagine glycan is attached at asparagine 239. An O-linked (Glc...) serine glycan is attached at serine 271. Residues aspartate 324–glutamine 360 form the EGF-like 7; calcium-binding domain. The EGF-like 8; calcium-binding domain maps to aspartate 362–serine 398. One can recognise an EGF-like 9 domain in the interval glutamine 400–glycine 440. Residue asparagine 442 is glycosylated (N-linked (GlcNAc...) asparagine). In terms of domain architecture, Laminin G-like 1 spans threonine 444–cysteine 607. Disulfide bonds link cysteine 583–cysteine 607, cysteine 613–cysteine 624, cysteine 618–cysteine 633, and cysteine 635–cysteine 644. In terms of domain architecture, EGF-like 10 spans arginine 609 to threonine 645. Residues proline 649–cysteine 808 enclose the Laminin G-like 2 domain. Residues asparagine 672, asparagine 693, asparagine 789, and asparagine 803 are each glycosylated (N-linked (GlcNAc...) asparagine). 4 cysteine pairs are disulfide-bonded: cysteine 769-cysteine 808, cysteine 814-cysteine 825, cysteine 819-cysteine 834, and cysteine 836-cysteine 845. The EGF-like 11 domain maps to serine 810–alanine 846. 4 N-linked (GlcNAc...) asparagine glycosylation sites follow: asparagine 839, asparagine 889, asparagine 929, and asparagine 1006. The region spanning valine 872–cysteine 1051 is the Laminin G-like 3 domain. Cystine bridges form between cysteine 1010–cysteine 1051, cysteine 1057–cysteine 1068, cysteine 1062–cysteine 1077, cysteine 1079–cysteine 1088, cysteine 1095–cysteine 1105, cysteine 1100–cysteine 1115, cysteine 1117–cysteine 1126, cysteine 1135–cysteine 1147, cysteine 1141–cysteine 1156, cysteine 1158–cysteine 1167, cysteine 1174–cysteine 1185, cysteine 1179–cysteine 1194, and cysteine 1196–cysteine 1205. EGF-like domains follow at residues glycine 1053–glutamate 1089, arginine 1091–arginine 1127, leucine 1131–glutamine 1168, and leucine 1170–glutamate 1206. Residues asparagine 1138 and asparagine 1155 are each glycosylated (N-linked (GlcNAc...) asparagine). A helical membrane pass occupies residues valine 1222–isoleucine 1242. Topologically, residues leucine 1243–isoleucine 1282 are cytoplasmic. An interaction with EPB41L5 region spans residues arginine 1246–isoleucine 1282.

It belongs to the Crumbs protein family. As to quaternary structure, interacts (via intracellular domain) with EPB41L5. Post-translationally, O-glucosylated by POGLUT1 at Ser-271; consists of an O-glucose trisaccharide, in which the O-glucose is elongated by the addition of two xylose residues. O-glucosylation is required for localization at the plasma membrane. In terms of tissue distribution, in the adult eye, strongly expressed in the outer nuclear layer, containing the cell bodies of the photoreceptor cells, and in the inner nuclear layer, containing the cell bodies of the horizontal, bipolar, amacrine, and Mueller glial cells. Also expressed in some cells in the ganglion cell layer (or may be displaced amacrine cells rather than ganglion cells).

It localises to the apical cell membrane. Its function is as follows. Apical polarity protein that plays a central role during the epithelial-to-mesenchymal transition (EMT) at gastrulation, when newly specified mesodermal cells move inside the embryo. Acts by promoting cell ingression, the process by which cells leave the epithelial epiblast and move inside the embryo to form a new tissue layer. The anisotropic distribution of CRB2 and MYH10/myosin-IIB at cell edges define which cells will ingress: cells with high apical CRB2 are probably extruded from the epiblast by neighboring cells with high levels of apical MYH10/myosin-IIB. Also required for maintenance of the apical polarity complex during development of the cortex. This chain is Protein crumbs homolog 2, found in Mus musculus (Mouse).